The sequence spans 365 residues: Donuts protein 1 (365 aa).

Positions 28–49 (NSGLELPSQDYTNVEEKESSPK) are disordered. A CUE domain is found at 82–125 (EKLCVLKELKIAFPEVDDTLIKAILIASQGVLEPAFNSLLYYSS). Disordered regions lie at residues 215–246 (HNTI…KGVN) and 286–335 (ESEE…YKSA). The span at 224 to 244 (SILKGKEKGKEEEKEKGEEKG) shows a compositional bias: basic and acidic residues. Residues 286–295 (ESEEEEEQDV) show a composition bias toward acidic residues. Residues 315 to 331 (EAQRDSADRLPAKDDGG) are compositionally biased toward basic and acidic residues.

In terms of assembly, may interact directly with ADY3. Probable component of a spindle pole body (SPB) complex composed of ADY3, SSP1, DON1, MPC54, SPO21/MPC70, NUD1 and CNM67.

It localises to the prospore membrane. In terms of biological role, involved in the pathway that organizes the prospore membrane (PSM) during sporulation. This chain is Donuts protein 1 (DON1), found in Saccharomyces cerevisiae (strain ATCC 204508 / S288c) (Baker's yeast).